The chain runs to 1089 residues: GPI ethanolamine phosphate transferase 3, catalytic subunit (1089 aa).

A helical transmembrane segment spans residues 4–24 (ASVLLFLAWVCFLFYAGIALF). N-linked (GlcNAc...) asparagine glycosylation occurs at N268. The next 13 membrane-spanning stretches (helical) occupy residues 457-477 (LLAA…SPGF), 482-502 (LLLT…GLLG), 510-530 (LVLL…WKAW), 541-561 (TLFP…AVFF), 575-595 (FLLG…GQLL), 668-688 (LWYG…RLWL), 701-721 (MLFV…YWAL), 747-767 (VAGL…TVLV), 830-850 (SVYS…LLLL), 857-877 (LVFL…AAGI), 944-964 (FASH…PFLC), 1014-1034 (LKYL…ASIL), and 1048-1068 (FIFE…GIAL).

It belongs to the PIGG/PIGN/PIGO family. PIGO subfamily. As to quaternary structure, part of the ethanolamine phosphate transferase 3 complex composed by PIGO and PIGF. PIGF is required to stabilize PIGO.

Its subcellular location is the endoplasmic reticulum membrane. Its pathway is glycolipid biosynthesis; glycosylphosphatidylinositol-anchor biosynthesis. In terms of biological role, catalytic subunit of the ethanolamine phosphate transferase 3 complex that transfers an ethanolamine phosphate (EtNP) from a phosphatidylethanolamine (PE) to the 6-OH position of the third alpha-1,2-linked mannose of an alpha-D-Man-(1-&gt;2)-alpha-D-Man-(1-&gt;6)-2-PEtn-alpha-D-Man-(1-&gt;4)-alpha-D-GlcN-(1-&gt;6)-(1-radyl,2-acyl-sn-glycero-3-phospho)-2-acyl-inositol (also termed H6) intermediate to generate a 6-PEtn-alpha-D-Man-(1-&gt;2)-alpha-D-Man-(1-&gt;6)-2-PEtn-alpha-D-Man-(1-&gt;4)-alpha-D-GlcN-(1-&gt;6)-(1-radyl,2-acyl-sn-glycero-3-phospho)-2-acyl-inositol (also termed H7) and participates in the tenth step of the glycosylphosphatidylinositol-anchor biosynthesis. In Homo sapiens (Human), this protein is GPI ethanolamine phosphate transferase 3, catalytic subunit.